We begin with the raw amino-acid sequence, 358 residues long: Aminodeoxyfutalosine deaminase (358 aa).

2 residues coordinate Zn(2+): histidine 32 and histidine 34. Substrate is bound by residues arginine 87, aspartate 154, and glycine 188. Histidine 215 serves as a coordination point for Zn(2+). Glutamate 218 acts as the Proton donor in catalysis. A Zn(2+)-binding site is contributed by aspartate 296.

The protein belongs to the metallo-dependent hydrolases superfamily. Adenosine and AMP deaminases family. It depends on Zn(2+) as a cofactor.

It carries out the reaction 6-amino-6-deoxyfutalosine + H2O + H(+) = futalosine + NH4(+). The protein operates within quinol/quinone metabolism; menaquinone biosynthesis. Catalyzes the deamination of aminodeoxyfutalosine (AFL) into futalosine (FL), a step in the biosynthesis of menaquinone (MK, vitamin K2). To a lesser extent, can also deaminate adenosine, 5'-methylthioadenosine, 5'-deoxyadenosine, and 2'-deoxyadenosine. This chain is Aminodeoxyfutalosine deaminase (add2), found in Streptomyces avermitilis (strain ATCC 31267 / DSM 46492 / JCM 5070 / NBRC 14893 / NCIMB 12804 / NRRL 8165 / MA-4680).